Here is a 73-residue protein sequence, read N- to C-terminus: Putative membrane protein insertion efficiency factor (73 aa).

The protein belongs to the UPF0161 family.

The protein resides in the cell inner membrane. Functionally, could be involved in insertion of integral membrane proteins into the membrane. This Rickettsia bellii (strain OSU 85-389) protein is Putative membrane protein insertion efficiency factor.